Here is a 346-residue protein sequence, read N- to C-terminus: Phenylalanine--tRNA ligase alpha subunit (346 aa).

E259 lines the Mg(2+) pocket.

It belongs to the class-II aminoacyl-tRNA synthetase family. Phe-tRNA synthetase alpha subunit type 1 subfamily. In terms of assembly, tetramer of two alpha and two beta subunits. Mg(2+) serves as cofactor.

The protein resides in the cytoplasm. The enzyme catalyses tRNA(Phe) + L-phenylalanine + ATP = L-phenylalanyl-tRNA(Phe) + AMP + diphosphate + H(+). The protein is Phenylalanine--tRNA ligase alpha subunit of Lactococcus lactis subsp. lactis (strain IL1403) (Streptococcus lactis).